Reading from the N-terminus, the 429-residue chain is Phosphoribosylamine--glycine ligase (429 aa).

In terms of domain architecture, ATP-grasp spans 109–316; sequence KDFLARHQIP…LVELCLAAID (208 aa). An ATP-binding site is contributed by 135-196; the sequence is VREQGAPIVV…EEFLDGEEAS (62 aa). The segment at 212–234 is disordered; the sequence is SQDHKRVGDKDTGPNTGGMGAYS. The segment covering 213 to 223 has biased composition (basic and acidic residues); that stretch reads QDHKRVGDKDT. Positions 286 and 288 each coordinate Mg(2+).

Belongs to the GARS family. Mg(2+) is required as a cofactor. The cofactor is Mn(2+).

It catalyses the reaction 5-phospho-beta-D-ribosylamine + glycine + ATP = N(1)-(5-phospho-beta-D-ribosyl)glycinamide + ADP + phosphate + H(+). It functions in the pathway purine metabolism; IMP biosynthesis via de novo pathway; N(1)-(5-phospho-D-ribosyl)glycinamide from 5-phospho-alpha-D-ribose 1-diphosphate: step 2/2. The chain is Phosphoribosylamine--glycine ligase from Vibrio vulnificus (strain CMCP6).